Here is a 108-residue protein sequence, read N- to C-terminus: Mitochondrial pyruvate carrier 4 (108 aa).

The next 3 membrane-spanning stretches (helical) occupy residues 19 to 35, 51 to 67, and 74 to 90; these read IHFWAPTFKWGISIANI, IAVTCTGVIWSRYSMVI, and LFSVNVAMAGTGIYQLA.

The protein belongs to the mitochondrial pyruvate carrier (MPC) (TC 2.A.105) family.

Its subcellular location is the mitochondrion inner membrane. Functionally, mediates the uptake of pyruvate into mitochondria. This Arabidopsis thaliana (Mouse-ear cress) protein is Mitochondrial pyruvate carrier 4.